Consider the following 338-residue polypeptide: Ketol-acid reductoisomerase (NADP(+)) (338 aa).

Positions 3–183 (IELLYDADAD…GGARAGVIPT (181 aa)) constitute a KARI N-terminal Rossmann domain. NADP(+) contacts are provided by residues 26-29 (YGSQ), Arg-49, Ser-52, Ser-54, and 84-87 (DTSQ). His-109 is an active-site residue. Gly-135 serves as a coordination point for NADP(+). One can recognise a KARI C-terminal knotted domain in the interval 184–329 (TFEAETVTDL…AKLRDLMSWV (146 aa)). The Mg(2+) site is built by Asp-192, Glu-196, Glu-228, and Glu-232. Ser-253 provides a ligand contact to substrate.

Belongs to the ketol-acid reductoisomerase family. Mg(2+) is required as a cofactor.

The enzyme catalyses (2R)-2,3-dihydroxy-3-methylbutanoate + NADP(+) = (2S)-2-acetolactate + NADPH + H(+). The catalysed reaction is (2R,3R)-2,3-dihydroxy-3-methylpentanoate + NADP(+) = (S)-2-ethyl-2-hydroxy-3-oxobutanoate + NADPH + H(+). It functions in the pathway amino-acid biosynthesis; L-isoleucine biosynthesis; L-isoleucine from 2-oxobutanoate: step 2/4. Its pathway is amino-acid biosynthesis; L-valine biosynthesis; L-valine from pyruvate: step 2/4. Functionally, involved in the biosynthesis of branched-chain amino acids (BCAA). Catalyzes an alkyl-migration followed by a ketol-acid reduction of (S)-2-acetolactate (S2AL) to yield (R)-2,3-dihydroxy-isovalerate. In the isomerase reaction, S2AL is rearranged via a Mg-dependent methyl migration to produce 3-hydroxy-3-methyl-2-ketobutyrate (HMKB). In the reductase reaction, this 2-ketoacid undergoes a metal-dependent reduction by NADPH to yield (R)-2,3-dihydroxy-isovalerate. In Corynebacterium glutamicum (strain ATCC 13032 / DSM 20300 / JCM 1318 / BCRC 11384 / CCUG 27702 / LMG 3730 / NBRC 12168 / NCIMB 10025 / NRRL B-2784 / 534), this protein is Ketol-acid reductoisomerase (NADP(+)).